Reading from the N-terminus, the 477-residue chain is Aspartyl/glutamyl-tRNA(Asn/Gln) amidotransferase subunit B (477 aa).

The protein belongs to the GatB/GatE family. GatB subfamily. As to quaternary structure, heterotrimer of A, B and C subunits.

It catalyses the reaction L-glutamyl-tRNA(Gln) + L-glutamine + ATP + H2O = L-glutaminyl-tRNA(Gln) + L-glutamate + ADP + phosphate + H(+). It carries out the reaction L-aspartyl-tRNA(Asn) + L-glutamine + ATP + H2O = L-asparaginyl-tRNA(Asn) + L-glutamate + ADP + phosphate + 2 H(+). In terms of biological role, allows the formation of correctly charged Asn-tRNA(Asn) or Gln-tRNA(Gln) through the transamidation of misacylated Asp-tRNA(Asn) or Glu-tRNA(Gln) in organisms which lack either or both of asparaginyl-tRNA or glutaminyl-tRNA synthetases. The reaction takes place in the presence of glutamine and ATP through an activated phospho-Asp-tRNA(Asn) or phospho-Glu-tRNA(Gln). The protein is Aspartyl/glutamyl-tRNA(Asn/Gln) amidotransferase subunit B of Coxiella burnetii (strain CbuG_Q212) (Coxiella burnetii (strain Q212)).